The chain runs to 1023 residues: Probable beta-glucosidase E (1023 aa).

The interval 1–51 (MPKSYTPVHDSIPEEDHFSSDDESNFRLHRIDRSASRSQSPKENEGEPSIL) is disordered. Over 1–128 (MPKSYTPVHD…AVYYSKTWWR (128 aa)) the chain is Cytoplasmic. Over residues 11–45 (SIPEEDHFSSDDESNFRLHRIDRSASRSQSPKENE) the composition is skewed to basic and acidic residues. A helical; Signal-anchor for type II membrane protein transmembrane segment spans residues 129 to 149 (TLVVVIIALGLLVWGFLKYAS). At 150–1023 (TRGDIWEEYD…NLPLGKPFDP (874 aa)) the chain is on the extracellular side. 2 N-linked (GlcNAc...) asparagine glycosylation sites follow: asparagine 199 and asparagine 387. Residue aspartate 415 is part of the active site. Asparagine 458 and asparagine 497 each carry an N-linked (GlcNAc...) asparagine glycan. 2 disordered regions span residues 485 to 515 (WESPAPDGDGGPNFSSWTDDEFGFRYPGSPG) and 822 to 841 (NPSRLPAARPPDAVAPPSYD). Positions 827-838 (PAARPPDAVAPP) are enriched in low complexity. Asparagine 848 carries an N-linked (GlcNAc...) asparagine glycan. The segment at 873 to 909 (ATTPPPPNPEASGSATDQKPHRTKPSDAGGGAGGNPS) is disordered. 2 N-linked (GlcNAc...) asparagine glycosylation sites follow: asparagine 964 and asparagine 979.

The protein belongs to the glycosyl hydrolase 3 family.

It localises to the cell membrane. It carries out the reaction Hydrolysis of terminal, non-reducing beta-D-glucosyl residues with release of beta-D-glucose.. It participates in glycan metabolism; cellulose degradation. In terms of biological role, beta-glucosidases are one of a number of cellulolytic enzymes involved in the degradation of cellulosic biomass. Catalyzes the last step releasing glucose from the inhibitory cellobiose. The protein is Probable beta-glucosidase E (bglE) of Emericella nidulans (strain FGSC A4 / ATCC 38163 / CBS 112.46 / NRRL 194 / M139) (Aspergillus nidulans).